The sequence spans 2682 residues: 3-methylorcinaldehyde synthase (2682 aa).

Positions Leu111–His272 are N-terminal acylcarrier protein transacylase domain (SAT). Catalysis depends on Cys154, which acts as the Nucleophile; for transacylase activity. His272 acts as the Proton donor/acceptor; for transacylase activity in catalysis. The 426-residue stretch at Glu401–Gln826 folds into the Ketosynthase family 3 (KS3) domain. Active-site for beta-ketoacyl synthase activity residues include Cys573, His708, and His749. A malonyl-CoA:ACP transacylase (MAT) domain region spans residues Phe947–Asp1237. The N-terminal hotdog fold stretch occupies residues Leu1339–Asp1468. The 313-residue stretch at Leu1339–Gln1651 folds into the PKS/mFAS DH domain. The tract at residues Leu1367–Ser1649 is product template (PT) domain. The active-site Proton acceptor; for dehydratase activity is the His1371. The C-terminal hotdog fold stretch occupies residues Val1496 to Gln1651. The active-site Proton donor; for dehydratase activity is Asp1555. In terms of domain architecture, Carrier spans Glu1723–Val1797. Ser1757 is subject to O-(pantetheine 4'-phosphoryl)serine. A methyltransferase domain region spans residues Glu2021–Glu2211. The NADPH-binding (R) domain stretch occupies residues Val2303 to Ala2548.

It participates in secondary metabolite biosynthesis; terpenoid biosynthesis. Functionally, non-reducing polyketide synthase; part of the gene cluster that mediates the biosynthesis of eupenifeldin, a bistropolone meroterpenoid that acts as an antitumor agent. The first step of eupenifeldin biosynthesis is the biosynthesis of 3-methylorcinaldehyde performed by the non-reducing polyketide synthase eupA. Oxidative dearomatization of 3-methylorcinaldehyde likely catalyzed by the FAD-dependent monooxygenase eupB is followed by oxidative ring expansion by the 2-oxoglutarate-dependent dioxygenase eupC to provide the first tropolone metabolite, tropolone stipitaldehyde. In parallel, generation of sesquiterpene alpha-humulene from farnesylpyrophosphate (FPP) is catalyzed by the terpene cyclase eupE. The cytochrome P450 monooxygenase eupD then hydroxylates humulene to humulenol. The putative Diels-Alderase eupF probably catalyzes the formation of the tropolone-humulene skeleton by linking humulenol and the polyketide moiety. The short-chain dehydrogenase/reductase eupG and the flavin-dependent monooxygenase eupH are also essential for eupenifeldin biosynthesis and are likely the additional decorating enzymes of the tropolone-humulene skeleton to produce final eupenifeldin or derivatives. This Phoma sp protein is 3-methylorcinaldehyde synthase.